We begin with the raw amino-acid sequence, 133 residues long: Small ribosomal subunit protein uS8 (133 aa).

This sequence belongs to the universal ribosomal protein uS8 family. In terms of assembly, part of the 30S ribosomal subunit. Contacts proteins S5 and S12.

In terms of biological role, one of the primary rRNA binding proteins, it binds directly to 16S rRNA central domain where it helps coordinate assembly of the platform of the 30S subunit. The polypeptide is Small ribosomal subunit protein uS8 (Chloroflexus aurantiacus (strain ATCC 29364 / DSM 637 / Y-400-fl)).